A 78-amino-acid polypeptide reads, in one-letter code: Small integral membrane protein 5 (78 aa).

The helical transmembrane segment at 32 to 52 (ILAFSVLVVFTATVVLLLLIA) threads the bilayer.

It is found in the membrane. In Bos taurus (Bovine), this protein is Small integral membrane protein 5 (SMIM5).